The primary structure comprises 360 residues: Phospho-N-acetylmuramoyl-pentapeptide-transferase (360 aa).

The next 10 helical transmembrane spans lie at Ile27 to Trp47, Pro72 to Tyr92, Ser94 to Ile114, Trp132 to Gly152, Ile168 to Ser188, Gly199 to Thr219, Ala236 to Phe256, Val263 to Leu283, Phe288 to Val308, and Val338 to Lys358.

It belongs to the glycosyltransferase 4 family. MraY subfamily. It depends on Mg(2+) as a cofactor.

The protein resides in the cell inner membrane. The enzyme catalyses UDP-N-acetyl-alpha-D-muramoyl-L-alanyl-gamma-D-glutamyl-meso-2,6-diaminopimeloyl-D-alanyl-D-alanine + di-trans,octa-cis-undecaprenyl phosphate = di-trans,octa-cis-undecaprenyl diphospho-N-acetyl-alpha-D-muramoyl-L-alanyl-D-glutamyl-meso-2,6-diaminopimeloyl-D-alanyl-D-alanine + UMP. Its pathway is cell wall biogenesis; peptidoglycan biosynthesis. In terms of biological role, catalyzes the initial step of the lipid cycle reactions in the biosynthesis of the cell wall peptidoglycan: transfers peptidoglycan precursor phospho-MurNAc-pentapeptide from UDP-MurNAc-pentapeptide onto the lipid carrier undecaprenyl phosphate, yielding undecaprenyl-pyrophosphoryl-MurNAc-pentapeptide, known as lipid I. This Yersinia pestis bv. Antiqua (strain Angola) protein is Phospho-N-acetylmuramoyl-pentapeptide-transferase.